The sequence spans 369 residues: 4-hydroxy-3-methylbut-2-en-1-yl diphosphate synthase (flavodoxin) (369 aa).

[4Fe-4S] cluster is bound by residues Cys270, Cys273, Cys305, and Glu312.

Belongs to the IspG family. The cofactor is [4Fe-4S] cluster.

The enzyme catalyses (2E)-4-hydroxy-3-methylbut-2-enyl diphosphate + oxidized [flavodoxin] + H2O + 2 H(+) = 2-C-methyl-D-erythritol 2,4-cyclic diphosphate + reduced [flavodoxin]. The protein operates within isoprenoid biosynthesis; isopentenyl diphosphate biosynthesis via DXP pathway; isopentenyl diphosphate from 1-deoxy-D-xylulose 5-phosphate: step 5/6. Functionally, converts 2C-methyl-D-erythritol 2,4-cyclodiphosphate (ME-2,4cPP) into 1-hydroxy-2-methyl-2-(E)-butenyl 4-diphosphate. The protein is 4-hydroxy-3-methylbut-2-en-1-yl diphosphate synthase (flavodoxin) of Pseudomonas putida (strain ATCC 700007 / DSM 6899 / JCM 31910 / BCRC 17059 / LMG 24140 / F1).